The primary structure comprises 262 residues: Troponin T, slow skeletal muscle (262 aa).

The span at 1 to 31 (MSDTEEQEYEEEQAEDEEAVEEEEAPEEPEP) shows a compositional bias: acidic residues. Disordered stretches follow at residues 1–62 (MSDT…ERVD) and 109–153 (ERAE…KKKV). The residue at position 2 (S2) is a Phosphoserine; by CK2. A compositionally biased stretch (basic and acidic residues) spans 32–41 (VAEREEERPK). Positions 43 to 55 (SRPVVPPLIPPKI) are enriched in pro residues. A compositionally biased stretch (basic and acidic residues) spans 109 to 149 (ERAEQQRFRTEKERERQAKLAEEKMRKEEEEAKKRAEDDAK).

Belongs to the troponin T family. Interacts with TPM3. In terms of tissue distribution, expressed in adult soleus muscle.

In terms of biological role, troponin T is the tropomyosin-binding subunit of troponin, the thin filament regulatory complex which confers calcium-sensitivity to striated muscle actomyosin ATPase activity. The chain is Troponin T, slow skeletal muscle (Tnnt1) from Mus musculus (Mouse).